The sequence spans 499 residues: Lysine--tRNA ligase (499 aa).

The Mg(2+) site is built by glutamate 408 and glutamate 415.

Belongs to the class-II aminoacyl-tRNA synthetase family. Homodimer. Mg(2+) serves as cofactor.

The protein resides in the cytoplasm. The catalysed reaction is tRNA(Lys) + L-lysine + ATP = L-lysyl-tRNA(Lys) + AMP + diphosphate. The sequence is that of Lysine--tRNA ligase from Thermoanaerobacter sp. (strain X514).